The sequence spans 249 residues: Metallo-beta-lactamase type 2 (249 aa).

Residues 1–22 (MLKKIKISLILALGLTSLQAFG) form the signal peptide. Zn(2+) is bound by residues His-98, His-100, Asp-102, His-161, and Cys-180. A substrate-binding site is contributed by Lys-183. His-222 serves as a coordination point for Zn(2+).

This sequence belongs to the metallo-beta-lactamase superfamily. Class-B beta-lactamase family. Monomer. It depends on Zn(2+) as a cofactor.

Its subcellular location is the periplasm. The catalysed reaction is a beta-lactam + H2O = a substituted beta-amino acid. Confers resistance to the different beta-lactams antibiotics (penicillin, cephalosporin and carbapenem) via the hydrolysis of the beta-lactam ring. This Elizabethkingia meningoseptica (Chryseobacterium meningosepticum) protein is Metallo-beta-lactamase type 2 (blaB2).